Consider the following 622-residue polypeptide: Ferredoxin-fold anticodon-binding domain-containing protein 1 homolog (622 aa).

Positions 529-622 constitute an FDX-ACB domain; the sequence is LYPPCYVHDV…IQRQLHVSPR (94 aa).

The polypeptide is Ferredoxin-fold anticodon-binding domain-containing protein 1 homolog (Fdxacb1) (Mus musculus (Mouse)).